Consider the following 419-residue polypeptide: Peptide chain release factor subunit 1 (419 aa).

This sequence belongs to the eukaryotic release factor 1 family. In terms of assembly, heterodimer of two subunits, one of which binds GTP.

It localises to the cytoplasm. Its function is as follows. Directs the termination of nascent peptide synthesis (translation) in response to the termination codons UAA, UAG and UGA. The polypeptide is Peptide chain release factor subunit 1 (Methanococcus maripaludis (strain C6 / ATCC BAA-1332)).